A 205-amino-acid chain; its full sequence is Phosphoserine phosphatase ThrH (205 aa).

The active-site Nucleophile is D7. The Mg(2+) site is built by D7 and E9. The active-site Proton donor is E9. Substrate-binding positions include E15, R46, 90–91 (SD), and K133. D152 contacts Mg(2+). N155 is a substrate binding site.

This sequence belongs to the thrH family. Mg(2+) serves as cofactor.

It carries out the reaction O-phospho-L-serine + H2O = L-serine + phosphate. It catalyses the reaction O-phospho-D-serine + H2O = D-serine + phosphate. It participates in amino-acid biosynthesis; L-serine biosynthesis; L-serine from 3-phospho-D-glycerate: step 3/3. Its function is as follows. Phosphoserine phosphatase that mediates dephosphorylation of phosphoserine in the serine biosynthesis pathway. Also able to dephosphorylate other substrates such as phospho-L(or D)-threonine, with lower activity. Shows phosphoserine:homoserine phosphotransferase activity by transferring the phosphoryl group to homoserine using phosphoserine as the phosphoryl group donor. This chain is Phosphoserine phosphatase ThrH (thrH), found in Pseudomonas aeruginosa (strain ATCC 15692 / DSM 22644 / CIP 104116 / JCM 14847 / LMG 12228 / 1C / PRS 101 / PAO1).